We begin with the raw amino-acid sequence, 31 residues long: Photosystem II reaction center protein T (31 aa).

The chain crosses the membrane as a helical span at residues 3 to 23 (SVAYILILTMALAVLFFAIAF).

The protein belongs to the PsbT family. In terms of assembly, PSII is composed of 1 copy each of membrane proteins PsbA, PsbB, PsbC, PsbD, PsbE, PsbF, PsbH, PsbI, PsbJ, PsbK, PsbL, PsbM, PsbT, PsbX, PsbY, PsbZ, Psb30/Ycf12, peripheral proteins PsbO, CyanoQ (PsbQ), PsbU, PsbV and a large number of cofactors. It forms dimeric complexes.

It is found in the cellular thylakoid membrane. Found at the monomer-monomer interface of the photosystem II (PS II) dimer, plays a role in assembly and dimerization of PSII. PSII is a light-driven water plastoquinone oxidoreductase, using light energy to abstract electrons from H(2)O, generating a proton gradient subsequently used for ATP formation. The sequence is that of Photosystem II reaction center protein T from Gloeothece citriformis (strain PCC 7424) (Cyanothece sp. (strain PCC 7424)).